Here is a 217-residue protein sequence, read N- to C-terminus: 3,4-dihydroxy-2-butanone 4-phosphate synthase (217 aa).

D-ribulose 5-phosphate is bound by residues 37–38 (RE), D42, 150–154 (RQGHT), and E174. E38 contributes to the Mg(2+) binding site. Mg(2+) is bound at residue H153.

The protein belongs to the DHBP synthase family. Homodimer. It depends on Mg(2+) as a cofactor. Mn(2+) serves as cofactor.

It carries out the reaction D-ribulose 5-phosphate = (2S)-2-hydroxy-3-oxobutyl phosphate + formate + H(+). The protein operates within cofactor biosynthesis; riboflavin biosynthesis; 2-hydroxy-3-oxobutyl phosphate from D-ribulose 5-phosphate: step 1/1. Its function is as follows. Catalyzes the conversion of D-ribulose 5-phosphate to formate and 3,4-dihydroxy-2-butanone 4-phosphate. The chain is 3,4-dihydroxy-2-butanone 4-phosphate synthase from Photorhabdus laumondii subsp. laumondii (strain DSM 15139 / CIP 105565 / TT01) (Photorhabdus luminescens subsp. laumondii).